A 219-amino-acid chain; its full sequence is LexA repressor (219 aa).

The segment at residues 28–48 (RAEIAAELGFRSANAAEEHLQ) is a DNA-binding region (H-T-H motif). Active-site for autocatalytic cleavage activity residues include Ser138 and Lys175.

It belongs to the peptidase S24 family. In terms of assembly, homodimer.

The catalysed reaction is Hydrolysis of Ala-|-Gly bond in repressor LexA.. Functionally, represses a number of genes involved in the response to DNA damage (SOS response), including recA and lexA. In the presence of single-stranded DNA, RecA interacts with LexA causing an autocatalytic cleavage which disrupts the DNA-binding part of LexA, leading to derepression of the SOS regulon and eventually DNA repair. The chain is LexA repressor from Herminiimonas arsenicoxydans.